We begin with the raw amino-acid sequence, 733 residues long: Probable Rho-GTPase-activating protein 6 (733 aa).

The segment covering 116-125 (VFNESKSSSP) has biased composition (polar residues). Residues 116–135 (VFNESKSSSPPDAHTDKYFT) are disordered. Residue T141 is modified to Phosphothreonine. Positions 174-256 (RFDKPSNNGP…SKGSWSSILR (83 aa)) are disordered. Low complexity predominate over residues 179–195 (SNNGPLGRSSLNLSSLS). Polar residues-rich tracts occupy residues 196–218 (HELQTSQDSPSLSATNQLSSSDT) and 225–240 (PPSSFGSQRQFNASQD). The 235-residue stretch at 312 to 546 (TNLCKFTFPT…GLIIHWPEVL (235 aa)) folds into the Rho-GAP domain. Residues 692–713 (PVTVTASSETNKKSQKINKKAS) form a disordered region. A compositionally biased stretch (basic residues) spans 704–713 (KSQKINKKAS).

The polypeptide is Probable Rho-GTPase-activating protein 6 (rga6) (Schizosaccharomyces pombe (strain 972 / ATCC 24843) (Fission yeast)).